Reading from the N-terminus, the 778-residue chain is Endonuclease MutS2 (778 aa).

328-335 (GPNTGGKT) contributes to the ATP binding site. The region spanning 702 to 777 (LDLRGKRYEE…GSGATIVTFK (76 aa)) is the Smr domain.

It belongs to the DNA mismatch repair MutS family. MutS2 subfamily. As to quaternary structure, homodimer. Binds to stalled ribosomes, contacting rRNA.

Its function is as follows. Endonuclease that is involved in the suppression of homologous recombination and thus may have a key role in the control of bacterial genetic diversity. In terms of biological role, acts as a ribosome collision sensor, splitting the ribosome into its 2 subunits. Detects stalled/collided 70S ribosomes which it binds and splits by an ATP-hydrolysis driven conformational change. Acts upstream of the ribosome quality control system (RQC), a ribosome-associated complex that mediates the extraction of incompletely synthesized nascent chains from stalled ribosomes and their subsequent degradation. Probably generates substrates for RQC. This Streptococcus pneumoniae (strain P1031) protein is Endonuclease MutS2.